A 351-amino-acid chain; its full sequence is Glucose 1-dehydrogenase 1 (351 aa).

Zn(2+) is bound at residue Cys-39. Thr-41 contributes to the substrate binding site. Zn(2+) is bound by residues His-64 and Glu-65. Substrate contacts are provided by Glu-113 and Glu-149. Glu-149 is a Zn(2+) binding site. NADP(+) contacts are provided by residues 182-185 (AGPI), 265-267 (LGI), and 292-294 (ATN). Asn-294 provides a ligand contact to substrate.

It belongs to the zinc-containing alcohol dehydrogenase family. Glucose 1-dehydrogenase subfamily. It depends on Zn(2+) as a cofactor.

The catalysed reaction is D-glucose + NAD(+) = D-glucono-1,5-lactone + NADH + H(+). It carries out the reaction D-glucose + NADP(+) = D-glucono-1,5-lactone + NADPH + H(+). In terms of biological role, catalyzes the NAD(P)(+)-dependent oxidation of D-glucose to D-gluconate via gluconolactone. Can utilize both NAD(+) and NADP(+) as electron acceptor. Is involved in the degradation of glucose through a non-phosphorylative variant of the Entner-Doudoroff pathway. The polypeptide is Glucose 1-dehydrogenase 1 (Vulcanisaeta moutnovskia (strain 768-28)).